We begin with the raw amino-acid sequence, 700 residues long: Mitogen-activated protein kinase 9 (700 aa).

The Protein kinase domain occupies 107-398 (YRIQEVIGKG…AEEALTDPYF (292 aa)). ATP-binding positions include 113–121 (IGKGSYGVV) and K136. The active-site Proton acceptor is D233. T269 bears the Phosphothreonine mark. The TXY motif lies at 269 to 271 (TDY). A Phosphotyrosine modification is found at Y271. Residues 475-523 (EESNGSGSAIPMERKHASLPRSTTVHSTPIPPKEQPLAASLKSSRPVSD) form a disordered region.

Belongs to the protein kinase superfamily. CMGC Ser/Thr protein kinase family. MAP kinase subfamily. Post-translationally, dually phosphorylated on Thr-269 and Tyr-271, which activates the enzyme.

It carries out the reaction L-seryl-[protein] + ATP = O-phospho-L-seryl-[protein] + ADP + H(+). It catalyses the reaction L-threonyl-[protein] + ATP = O-phospho-L-threonyl-[protein] + ADP + H(+). With respect to regulation, activated by threonine and tyrosine phosphorylation. In Oryza sativa subsp. japonica (Rice), this protein is Mitogen-activated protein kinase 9 (MPK9).